A 114-amino-acid chain; its full sequence is UPF0342 protein LVIS_1488 (114 aa).

This sequence belongs to the UPF0342 family.

This chain is UPF0342 protein LVIS_1488, found in Levilactobacillus brevis (strain ATCC 367 / BCRC 12310 / CIP 105137 / JCM 1170 / LMG 11437 / NCIMB 947 / NCTC 947) (Lactobacillus brevis).